Consider the following 212-residue polypeptide: 2,3-bisphosphoglycerate-dependent phosphoglycerate mutase (212 aa).

Residues 9 to 16 (RHGQSEWN), 22 to 23 (TG), arginine 61, 88 to 91 (ERDY), lysine 99, 115 to 116 (RR), and 159 to 160 (GN) contribute to the substrate site. Histidine 10 serves as the catalytic Tele-phosphohistidine intermediate. Glutamate 88 acts as the Proton donor/acceptor in catalysis.

The protein belongs to the phosphoglycerate mutase family. BPG-dependent PGAM subfamily. As to quaternary structure, homodimer.

It catalyses the reaction (2R)-2-phosphoglycerate = (2R)-3-phosphoglycerate. The protein operates within carbohydrate degradation; glycolysis; pyruvate from D-glyceraldehyde 3-phosphate: step 3/5. Functionally, catalyzes the interconversion of 2-phosphoglycerate and 3-phosphoglycerate. The sequence is that of 2,3-bisphosphoglycerate-dependent phosphoglycerate mutase from Methylobacterium radiotolerans (strain ATCC 27329 / DSM 1819 / JCM 2831 / NBRC 15690 / NCIMB 10815 / 0-1).